Consider the following 89-residue polypeptide: Small ribosomal subunit protein uS15 (89 aa).

It belongs to the universal ribosomal protein uS15 family. In terms of assembly, part of the 30S ribosomal subunit. Forms a bridge to the 50S subunit in the 70S ribosome, contacting the 23S rRNA.

Functionally, one of the primary rRNA binding proteins, it binds directly to 16S rRNA where it helps nucleate assembly of the platform of the 30S subunit by binding and bridging several RNA helices of the 16S rRNA. Its function is as follows. Forms an intersubunit bridge (bridge B4) with the 23S rRNA of the 50S subunit in the ribosome. The polypeptide is Small ribosomal subunit protein uS15 (Shewanella loihica (strain ATCC BAA-1088 / PV-4)).